Reading from the N-terminus, the 331-residue chain is MAIELEGLGLSPELADVMTRLARVGADLARTIARNGVETDLAAGVGTNAGGDGQKALDVMADDAFREALTGTAVAYYASEEQDEVVTLGKGTLALAIDPLDGSSNIDVNVSIGTIFSIFPATDDPNTSFLRKGSEQIAGGYIIYGPQCALVCSFGRGVHHWVLDLDSRSFKRLPDIKALPQDTSEYAINASNYRHWPSPIRAFIDDLVAGAEGPRGRNFNMRWIASLVAETHRILMRGGVFLYPGDERKGYARGRLRHVYECAPIAFLITQVGGGATDGCEDILSALPDKLHARTPFVFGCAAKVARVTAYHDLPGEETSALFNTRGLFRS.

Residues glutamate 80, aspartate 98, leucine 100, and aspartate 101 each coordinate Mg(2+). Substrate contacts are provided by residues 101 to 104 (DGSS) and asparagine 189. Mg(2+) is bound at residue glutamate 261.

This sequence belongs to the FBPase class 1 family. As to quaternary structure, homotetramer. It depends on Mg(2+) as a cofactor.

It localises to the cytoplasm. The enzyme catalyses beta-D-fructose 1,6-bisphosphate + H2O = beta-D-fructose 6-phosphate + phosphate. It functions in the pathway carbohydrate biosynthesis; gluconeogenesis. The polypeptide is Fructose-1,6-bisphosphatase class 1 (Rhodobacter capsulatus (strain ATCC BAA-309 / NBRC 16581 / SB1003)).